A 247-amino-acid chain; its full sequence is MTVDKKELNVAISGIGNFKTYAIVFKPNYLYSTSPSLIYEHSAVLKMQNSAIVVDSDQSTFSSEKISIYLINATFNPFSTTENVNLIFQPISYGGAIKFTGTITFECYNEQTAEWWNETLGDIYGAGNVDRDGTNVTVILNDVELSINYLIATATSSRSVRYDVDLEPKHLKPLLNDSATYQLSAGSVKDFGVLVLDEYLNPIRNKAKLASVSINPDCGSCNKYLNSNGEVWCSFTPFPPRRSCASP.

This is an uncharacterized protein from Archaeoglobus fulgidus (strain ATCC 49558 / DSM 4304 / JCM 9628 / NBRC 100126 / VC-16).